Consider the following 119-residue polypeptide: Beta-2-microglobulin (119 aa).

The first 20 residues, 1 to 20 (MARFVVVPLLVLVSLFGLEA), serve as a signal peptide directing secretion. The 90-residue stretch at 25 to 114 (PKIQVYSRYP…VTFSTPKTVK (90 aa)) folds into the Ig-like C1-type domain. Cys45 and Cys100 are oxidised to a cystine.

It belongs to the beta-2-microglobulin family. In terms of assembly, heterodimer of an alpha chain and a beta chain. Beta-2-microglobulin is the beta-chain of major histocompatibility complex class I molecules.

The protein resides in the secreted. Functionally, component of the class I major histocompatibility complex (MHC). Involved in the presentation of peptide antigens to the immune system. The protein is Beta-2-microglobulin (B2M) of Saguinus oedipus (Cotton-top tamarin).